The sequence spans 1488 residues: WD repeat-containing protein 7 (1488 aa).

WD repeat units lie at residues 17–56 (APTH…EVNP), 62–104 (GHTA…CIEF), 156–199 (ISPD…SGLQ), 324–366 (VICP…DKQE), 404–443 (NEPL…IVQL), 462–507 (GHRN…MKHI), and 558–597 (RHLF…LDRC). 2 disordered regions span residues 761-781 (EEED…PEYR) and 911-947 (GDHM…QGQI). Basic and acidic residues predominate over residues 768–781 (VMRQRREESDPEYR). A Phosphoserine modification is found at S935. A compositionally biased stretch (polar residues) spans 937-947 (PASSNIVQGQI). WD repeat units lie at residues 1349-1388 (PAIC…CQTI) and 1390-1430 (GHKG…LGSI). S1454 carries the post-translational modification Phosphoserine.

This chain is WD repeat-containing protein 7 (Wdr7), found in Rattus norvegicus (Rat).